An 813-amino-acid chain; its full sequence is MGNYSTKIDEKWQKKWEENSLYKFNNKNLDKKLYVLEMFSYPSGSKLHAGHWFNYGPVDSWARFKRMQGYNVFQPMGFDAFGLPAENYAIKTGIHPKDSTFKNIETMETQLKAMGAMFNWENEVITCSPDYYKWTQWLFLKLYEKGLAYKKKAPVNWCPSCNTVLANEQVLDGKCERCDSNVDKKNLEQWFLKITDYADELLEKLDELDWPEKTKAMQKHWIGKSVGAEVTFNVADSDLSFNVFTTRVDTLFGVTYVVLAPENDLVDKLTTPENKAEVESYKTQAKNQSDIERQSITREKTGVFSGSYAINPINGKKVPIWIGDYVLNTYGTGCVMAVPAHDERDFAFATKYNLPIERVIEGGDSLPYTEYGGMVNSGEFDGLLGNEAKEAVISKLESMNLGRKKINYRLRDWLVSRQRYWGAPIPIIYCEKCGTVEVPIEQLPVELPYNVEFSPDGKSPLGKCDDFINTTCPKCGGPAKREADTLDTFVCSSWYYLRYPDNNNEKDAFNPELINKMLPVDKYVGGPEHACMHLLYARFITKALRDMGYLNFDEPFLSLTHQGLILGPDGLKMSKSKGNTISPDDYIKEFGADVFRMYLMFGFDYTEGGAWSDDAIKSIGKFVDRVERILENAREEIKNSKDNKSTMDKDEKELNYVRHHSIKSITEDIDKMQFNTSIARLMEFTNALSKYLGIDAIKNALFLRESIIDFITLLAPFAPHFAEEQWKLIGINSSIFNEKWPEFDPKALIKDEVEIAVQVNGKIRAKINISTSSSEDEIKESALNNEDIKNSIGDKEIKKVIVIKNRLVNIVAK.

The 'HIGH' region signature appears at 40–51; that stretch reads SYPSGSKLHAGH. The 'KMSKS' region signature appears at 572–576; sequence KMSKS. Lys575 serves as a coordination point for ATP.

Belongs to the class-I aminoacyl-tRNA synthetase family.

The protein resides in the cytoplasm. It catalyses the reaction tRNA(Leu) + L-leucine + ATP = L-leucyl-tRNA(Leu) + AMP + diphosphate. The polypeptide is Leucine--tRNA ligase (Clostridium botulinum (strain ATCC 19397 / Type A)).